We begin with the raw amino-acid sequence, 67 residues long: Sec-independent protein translocase protein TatA (67 aa).

A helical membrane pass occupies residues 1–21; the sequence is MFGLGGQELVLILLIVLLLFG.

It belongs to the TatA/E family. As to quaternary structure, forms a complex with TatC.

Its subcellular location is the cell inner membrane. In terms of biological role, part of the twin-arginine translocation (Tat) system that transports large folded proteins containing a characteristic twin-arginine motif in their signal peptide across membranes. TatA could form the protein-conducting channel of the Tat system. The polypeptide is Sec-independent protein translocase protein TatA (Chlorobaculum tepidum (strain ATCC 49652 / DSM 12025 / NBRC 103806 / TLS) (Chlorobium tepidum)).